Reading from the N-terminus, the 799-residue chain is Ribosome biogenesis protein BOP1 homolog (799 aa).

The disordered stretch occupies residues 1 to 171; that stretch reads MPRRVRAQKR…DDTSDEEHSL (171 aa). The span at 58–69 shows a compositional bias: acidic residues; sequence SESDVTDDEQID. Over residues 70-81 the composition is skewed to basic and acidic residues; it reads EEARQADRDLLK. The segment covering 93–121 has biased composition (acidic residues); that stretch reads DPSDADNDDDDDEEEAASDDDDEEEDAEP. Residues 122 to 132 show a composition bias toward low complexity; it reads SSDSSNEASDA. 7 WD repeats span residues 457–498, 500–538, 584–626, 629–669, 670–709, 713–752, and 769–799; these read GHKA…RVVT, DAEV…AAID, PHHA…TQHP, KRNR…KKLL, TGVR…KPYK, YHKY…DLGQ, and SDGM…KLHV.

It belongs to the WD repeat BOP1/ERB1 family.

The protein resides in the nucleus. The protein localises to the nucleolus. It is found in the nucleoplasm. Its function is as follows. Required for maturation of ribosomal RNAs and formation of the large ribosomal subunit. This chain is Ribosome biogenesis protein BOP1 homolog, found in Monosiga brevicollis (Choanoflagellate).